The chain runs to 360 residues: MFVARSIAADHKDLIHDVSFDFHGRRMATCSSDQSVKVWDKSENGNWHCTASWKTHSGSVWRVTWAHPEFGQVLASCSFDRTAAVWEEIVGESNDKLRGQSHWVKRTTLVDSRTSVTDVKFAPKHMGLMLATCSADGVVRIYEAPDVMNLSQWSLQHEISCKLSCSCISWNPSSSRAHSPMIAVGSDDSSPNIMGKVQIYEYNENTRKYAKAETLMSVSDPVHDIAFAPNLGRSFHILAVATKDVRIFTMKPLRKELSSSGGVTKFEIHTVAQFDNHNSQVWRVSWNITGTVLASSGDDGTVRLWKANYMDNWKCIGVLKGDGNPVGNSYQGFFGSSVGSAGQSLQNSVNGTPSSGRKHS.

6 WD repeats span residues 10–49 (DHKDLIHDVSFDFHGRRMATCSSDQSVKVWDKSENGNWHC), 55–96 (THSG…SNDK), 111–152 (DSRT…NLSQ), 160–210 (SCKL…RKYA), 217–258 (SVSD…KELS), and 276–315 (NHNSQVWRVSWNITGTVLASSGDDGTVRLWKANYMDNWKC).

Belongs to the WD repeat SEC13 family. Component of the Nup107-160 subcomplex of the nuclear pore complex (NPC). The Nup107-160 subcomplex includes NUP160, NUP133, NUP107, NUP98, NUP85, NUP43, NUP37, SEH1 and SEC13. Component of the GATOR2 subcomplex, composed of MIOS, SEC13, SEH1L, WDR24 and WDR59. The GATOR2 complex interacts with CASTOR1 and CASTOR2; the interaction is negatively regulated by arginine. The GATOR2 complex interacts with SESN1, SESN2 and SESN3; the interaction is negatively regulated by amino acids.

It is found in the chromosome. It localises to the centromere. The protein resides in the kinetochore. Its subcellular location is the nucleus. The protein localises to the nuclear pore complex. It is found in the lysosome membrane. The GATOR2 complex is negatively regulated by the upstream amino acid sensors CASTOR1 and SESN2, which sequester the GATOR2 complex in absence of amino acids. In the presence of abundant amino acids, GATOR2 is released from CASTOR1 and SESN2 and activated. Functionally, component of the Nup107-160 subcomplex of the nuclear pore complex (NPC). The Nup107-160 subcomplex is required for the assembly of a functional NPC. The Nup107-160 subcomplex is also required for normal kinetochore microtubule attachment, mitotic progression and chromosome segregation. This subunit plays a role in recruitment of the Nup107-160 subcomplex to the kinetochore. In terms of biological role, as a component of the GATOR2 complex, functions as an activator of the amino acid-sensing branch of the mTORC1 signaling pathway. The GATOR2 complex indirectly activates mTORC1 through the inhibition of the GATOR1 subcomplex. GATOR2 probably acts as an E3 ubiquitin-protein ligase toward GATOR1. In the presence of abundant amino acids, the GATOR2 complex mediates ubiquitination of the NPRL2 core component of the GATOR1 complex, leading to GATOR1 inactivation. In the absence of amino acids, GATOR2 is inhibited, activating the GATOR1 complex. The sequence is that of Nucleoporin SEH1-A (seh1l-a) from Xenopus laevis (African clawed frog).